We begin with the raw amino-acid sequence, 304 residues long: Splicing factor U2af small subunit B (304 aa).

The C3H1-type 1 zinc finger occupies 12-40 (EKDRVNCPFYFKIGACRHGDRCSRLHNRP). Positions 44 to 146 (PTIVLANMYQ…RPIIVEYSPV (103 aa)) constitute an RRM domain. The segment at 148–175 (DFREATCRQFEENSCNRGGYCNFMHVKQ) adopts a C3H1-type 2 zinc-finger fold. Over residues 184–207 (LYGGRSRRSHGRSRSPSPRHRRGN) the composition is skewed to basic residues. Residues 184-304 (LYGGRSRRSH…QWNREREEKP (121 aa)) are disordered. The segment covering 208 to 220 (RDRDDFRRERDGY) has biased composition (basic and acidic residues). Residues 221–258 (RGGGDGYRGGGGGGGGDGYRGGDSYRGGGGGGRRGGGS) are compositionally biased toward gly residues. A compositionally biased stretch (basic residues) spans 268 to 280 (RRRHGSPPRRARS). Over residues 281-304 (PVRESSEERRAKIEQWNREREEKP) the composition is skewed to basic and acidic residues.

This sequence belongs to the splicing factor SR family.

It is found in the nucleus. Its function is as follows. Necessary for the splicing of pre-mRNA. The chain is Splicing factor U2af small subunit B (U2AF35B) from Oryza sativa subsp. japonica (Rice).